A 257-amino-acid chain; its full sequence is UPF0246 protein Ssed_1188 (257 aa).

Belongs to the UPF0246 family.

This is UPF0246 protein Ssed_1188 from Shewanella sediminis (strain HAW-EB3).